Reading from the N-terminus, the 201-residue chain is Small ribosomal subunit protein uS4 (201 aa).

In terms of domain architecture, S4 RNA-binding spans 91–155 (SRLDNVVYRA…STLPFQVARE (65 aa)).

Belongs to the universal ribosomal protein uS4 family. As to quaternary structure, part of the 30S ribosomal subunit. Contacts protein S5. The interaction surface between S4 and S5 is involved in control of translational fidelity.

Functionally, one of the primary rRNA binding proteins, it binds directly to 16S rRNA where it nucleates assembly of the body of the 30S subunit. With S5 and S12 plays an important role in translational accuracy. The polypeptide is Small ribosomal subunit protein uS4 (Rhodococcus jostii (strain RHA1)).